A 612-amino-acid chain; its full sequence is Sulfite reductase [NADPH] hemoprotein beta-component (612 aa).

A disordered region spans residues 1-32 (MDDHKPIDTPDGPAVDTPGIGAHRYEAPPTDR). [4Fe-4S] cluster is bound by residues C469, C475, C514, and C518. C518 lines the siroheme pocket.

This sequence belongs to the nitrite and sulfite reductase 4Fe-4S domain family. Alpha(8)-beta(8). The alpha component is a flavoprotein, the beta component is a hemoprotein. The cofactor is siroheme. It depends on [4Fe-4S] cluster as a cofactor.

The enzyme catalyses hydrogen sulfide + 3 NADP(+) + 3 H2O = sulfite + 3 NADPH + 4 H(+). The protein operates within sulfur metabolism; hydrogen sulfide biosynthesis; hydrogen sulfide from sulfite (NADPH route): step 1/1. Functionally, component of the sulfite reductase complex that catalyzes the 6-electron reduction of sulfite to sulfide. This is one of several activities required for the biosynthesis of L-cysteine from sulfate. The protein is Sulfite reductase [NADPH] hemoprotein beta-component of Methylorubrum populi (strain ATCC BAA-705 / NCIMB 13946 / BJ001) (Methylobacterium populi).